We begin with the raw amino-acid sequence, 692 residues long: MKIFCSRANPTTGSVEWLEEDEHYDYHQEIARSSYADMLHDKDRNVKYYQGIRAAVSRVKDRGQKALVLDIGTGTGLLSMMAVTAGADFCYAIEVFKPMADAAVKIVEKNGFSDKIKVINKHSTEVTVGPEGDMPCRANILVTELFDTELIGEGALPSYEHAHRHLVEENCEAVPHRATVYAQLVESGRMWSWNKLFPIHVQTSLGEQVIVPPVDVESCPGAPSVCDIQLNQVSPADFTVLSDVLPMFSIDFSKQVSSSAACHSRRFEPLTSGRAQVVLSWWDIEMDPEGKIKCTMAPFWAHSDPEEMQWRDHWMQCVYFLPQEEPVVQGSALYLVAHHDDYCVWYSLQRTSPEKNERVRQMRPVCDCQAHLLWNRPRFGEINDQDRTDRYVQALRTVLKPDSVCLCVSDGSLLSVLAHHLGVEQVFTVESSAASHKLLRKIFKANHLEDKINIIEKRPELLTNEDLQGRKVSLLLGEPFFTTSLLPWHNLYFWYVRTAVDQHLGPGAMVMPQAASLHAVVVEFRDLWRIRSPCGDCEGFDVHIMDDMIKRALDFRESREAEPHPLWEYPCRSLSEPWQILTFDFQQPVPLQPLCAEGTVELRRPGQSHAAVLWMEYHLTPECTLSTGLLEPADPEGGCCWNPHCKQAVYFFSPAPDPRALLGGPRTVSYAVEFHPDTGDIIMEFRHADTPD.

SAM-dependent MTase PRMT-type domains follow at residues 14–345 (SVEW…YCVW) and 358–684 (RVRQ…IIME). R32 carries the omega-N-methylarginine modification. Catalysis depends on residues E144 and E153.

Belongs to the class I-like SAM-binding methyltransferase superfamily. Protein arginine N-methyltransferase family. PRMT7 subfamily. In terms of assembly, homodimer and heterodimer. Interacts with CTCFL. Interacts with PRMT5 and SNRPD3.

Its subcellular location is the cytoplasm. It localises to the cytosol. The protein resides in the nucleus. The enzyme catalyses L-arginyl-[protein] + S-adenosyl-L-methionine = N(omega)-methyl-L-arginyl-[protein] + S-adenosyl-L-homocysteine + H(+). In terms of biological role, arginine methyltransferase that can both catalyze the formation of omega-N monomethylarginine (MMA) and symmetrical dimethylarginine (sDMA), with a preference for the formation of MMA. Specifically mediates the symmetrical dimethylation of arginine residues in the small nuclear ribonucleoproteins Sm D1 (SNRPD1) and Sm D3 (SNRPD3); such methylation being required for the assembly and biogenesis of snRNP core particles. Specifically mediates the symmetric dimethylation of histone H4 'Arg-3' to form H4R3me2s. Plays a role in gene imprinting by being recruited by CTCFL at the H19 imprinted control region (ICR) and methylating histone H4 to form H4R3me2s, possibly leading to recruit DNA methyltransferases at these sites. May also play a role in embryonic stem cell (ESC) pluripotency. Also able to mediate the arginine methylation of histone H2A and myelin basic protein (MBP) in vitro; the relevance of such results is however unclear in vivo. The protein is Protein arginine N-methyltransferase 7 (PRMT7) of Homo sapiens (Human).